The primary structure comprises 566 residues: Cytokine-like nuclear factor N-PAC (566 aa).

Positions Val9–Phe70 constitute a PWWP domain. 2 disordered regions span residues Val127–Thr147 and Met206–Asp234. A dehydrogenase domain region spans residues Arg274 to Phe566. NAD(+) is bound by residues Gly284–Asn298 and Lys518.

The protein belongs to the HIBADH-related family. NP60 subfamily. Binds to mononucleosomes. Interacts with male-specific lethal (MSL) histone acetyltransferase complex at least composed of mof, msl-1, msl-2 and msl-3.

The protein resides in the chromosome. May have oxidoreductase activity. The polypeptide is Cytokine-like nuclear factor N-PAC (Anopheles gambiae (African malaria mosquito)).